The sequence spans 443 residues: Transmembrane protein 184C (443 aa).

Transmembrane regions (helical) follow at residues 15–35 (LVVL…IWKL), 46–66 (AWFI…WGIL), 84–104 (ILWM…YPDI), 182–202 (PVTT…EGDF), 210–230 (YLVI…VLFY), 252–272 (VVFV…AGVI), and 284–304 (VATG…AVAH). Positions 369–378 (TSLLSSSTQD) are enriched in polar residues. Positions 369-422 (TSLLSSSTQDPISAASSIPPSPSGHYQGFGQTITPQTTPTATTMPEELYSADSP) are disordered. Positions 399-411 (QTITPQTTPTATT) are enriched in low complexity.

It belongs to the TMEM184 family.

The protein localises to the membrane. May play a role in cell growth. The protein is Transmembrane protein 184C (tmem184c) of Xenopus tropicalis (Western clawed frog).